A 199-amino-acid chain; its full sequence is Glycerol-3-phosphate acyltransferase (199 aa).

5 helical membrane-spanning segments follow: residues 3–23, 50–70, 78–98, 113–133, and 154–174; these read AAVWTLLLAYLFGSVPAGVLV, WGPALVVAFFDVFKGGIAVLV, DWMLGGVALMAVLGHNYSVFL, LLFLDPVLALWTFPIGLSVIL, and LALGRPLWEVATVFLMALLIF.

The protein belongs to the PlsY family. Probably interacts with PlsX.

It is found in the cell inner membrane. It catalyses the reaction an acyl phosphate + sn-glycerol 3-phosphate = a 1-acyl-sn-glycero-3-phosphate + phosphate. The protein operates within lipid metabolism; phospholipid metabolism. In terms of biological role, catalyzes the transfer of an acyl group from acyl-phosphate (acyl-PO(4)) to glycerol-3-phosphate (G3P) to form lysophosphatidic acid (LPA). This enzyme utilizes acyl-phosphate as fatty acyl donor, but not acyl-CoA or acyl-ACP. This is Glycerol-3-phosphate acyltransferase from Thermus thermophilus (strain ATCC 27634 / DSM 579 / HB8).